Reading from the N-terminus, the 823-residue chain is Mitochondrial intermediate peptidase 2 (823 aa).

A mitochondrion-targeting transit peptide spans 1 to 33 (MRRLQQSLRRRSARRCPFILIPHRLLTTSYASY). Positions 532–553 (IDGDGLPEDWDKPYGPGLEADK) are disordered. H595 lines the Zn(2+) pocket. The active site involves E596. Residues H599 and H602 each contribute to the Zn(2+) site.

This sequence belongs to the peptidase M3 family. Zn(2+) serves as cofactor.

The protein localises to the mitochondrion matrix. It catalyses the reaction Release of an N-terminal octapeptide as second stage of processing of some proteins imported into the mitochondrion.. Functionally, cleaves proteins, imported into the mitochondrion, to their mature size. While most mitochondrial precursor proteins are processed to the mature form in one step by mitochondrial processing peptidase (MPP), the sequential cleavage by MIP of an octapeptide after initial processing by MPP is a required step for a subgroup of nuclear-encoded precursor proteins destined for the matrix or the inner membrane. The sequence is that of Mitochondrial intermediate peptidase 2 (OCT2) from Cryptococcus neoformans var. neoformans serotype D (strain B-3501A) (Filobasidiella neoformans).